A 326-amino-acid chain; its full sequence is 4-hydroxythreonine-4-phosphate dehydrogenase (326 aa).

Positions 133 and 134 each coordinate substrate. Residues histidine 163, histidine 208, and histidine 263 each contribute to the a divalent metal cation site. Positions 271, 280, and 289 each coordinate substrate.

Belongs to the PdxA family. Homodimer. It depends on Zn(2+) as a cofactor. Mg(2+) is required as a cofactor. The cofactor is Co(2+).

The protein localises to the cytoplasm. It catalyses the reaction 4-(phosphooxy)-L-threonine + NAD(+) = 3-amino-2-oxopropyl phosphate + CO2 + NADH. It functions in the pathway cofactor biosynthesis; pyridoxine 5'-phosphate biosynthesis; pyridoxine 5'-phosphate from D-erythrose 4-phosphate: step 4/5. Its function is as follows. Catalyzes the NAD(P)-dependent oxidation of 4-(phosphooxy)-L-threonine (HTP) into 2-amino-3-oxo-4-(phosphooxy)butyric acid which spontaneously decarboxylates to form 3-amino-2-oxopropyl phosphate (AHAP). This chain is 4-hydroxythreonine-4-phosphate dehydrogenase, found in Pseudoalteromonas atlantica (strain T6c / ATCC BAA-1087).